We begin with the raw amino-acid sequence, 140 residues long: UPF0251 protein Athe_2281 (140 aa).

It belongs to the UPF0251 family.

The polypeptide is UPF0251 protein Athe_2281 (Caldicellulosiruptor bescii (strain ATCC BAA-1888 / DSM 6725 / KCTC 15123 / Z-1320) (Anaerocellum thermophilum)).